Here is a 460-residue protein sequence, read N- to C-terminus: MVFDTIAAISTFPGEAGIGIVRLSGDDALEIISKIFKPYKSKDIKKVKSHTLHYGHIVDPETEEVYDEVLVSIMKKPNTYTREDIVEINCHGGIVVTSKILELVLKQGARLAEPGEFTKRAFLNGRIDLSQAEAVIDIIRAKTMLANRYAQKQLVGYVGSKIKEMKDKIMGLLVHLLALIDFPEEDVEELERKEILETAKEIVEDIDKLIASSESGRIIREGLKTAIIGKPNVGKSSLLNALLKENRAIVTDIPGTTRDIIEEYVNVKGIPIKLIDTAGIRDTDELVEKIGVTKSKEVLAEADLILFVLDASRELTKEDYEIFDILTGKNIIFVLNKIDLPKKIDEKELKDLTKDGIIIEVSTVEKIGLEELENTIYNLVFRGDISLREDEIVINSRHKEALINAKKYMESCVEAIEGGYSEDLITIDLNAALDQLGKITGETATEDLINEIFERFCVGK.

(6S)-5-formyl-5,6,7,8-tetrahydrofolate-binding residues include Arg22, Glu87, and Arg126. Positions 222–381 constitute a TrmE-type G domain; it reads GLKTAIIGKP…LENTIYNLVF (160 aa). Asn232 contacts K(+). GTP is bound by residues 232–237, 251–257, and 276–279; these read NVGKSS, TDIPGTT, and DTAG. Ser236 is a Mg(2+) binding site. Residues Thr251, Ile253, and Thr256 each contribute to the K(+) site. A Mg(2+)-binding site is contributed by Thr257. Residue Lys460 coordinates (6S)-5-formyl-5,6,7,8-tetrahydrofolate.

Belongs to the TRAFAC class TrmE-Era-EngA-EngB-Septin-like GTPase superfamily. TrmE GTPase family. Homodimer. Heterotetramer of two MnmE and two MnmG subunits. The cofactor is K(+).

Its subcellular location is the cytoplasm. Exhibits a very high intrinsic GTPase hydrolysis rate. Involved in the addition of a carboxymethylaminomethyl (cmnm) group at the wobble position (U34) of certain tRNAs, forming tRNA-cmnm(5)s(2)U34. The chain is tRNA modification GTPase MnmE from Thermoanaerobacter pseudethanolicus (strain ATCC 33223 / 39E) (Clostridium thermohydrosulfuricum).